The sequence spans 554 residues: 3-(3-hydroxy-phenyl)propionate/3-hydroxycinnamic acid hydroxylase (554 aa).

FAD-binding positions include 17–46 (QVAI…VVEK) and 285–295 (FRINRVLLAGD).

Belongs to the PheA/TfdB FAD monooxygenase family. Requires FAD as cofactor.

The enzyme catalyses 3-(3-hydroxyphenyl)propanoate + NADH + O2 + H(+) = 3-(2,3-dihydroxyphenyl)propanoate + NAD(+) + H2O. The catalysed reaction is (2E)-3-(3-hydroxyphenyl)prop-2-enoate + NADH + O2 + H(+) = (2E)-3-(2,3-dihydroxyphenyl)prop-2-enoate + NAD(+) + H2O. It functions in the pathway aromatic compound metabolism; 3-phenylpropanoate degradation. Catalyzes the insertion of one atom of molecular oxygen into position 2 of the phenyl ring of 3-(3-hydroxyphenyl)propionate (3-HPP) and hydroxycinnamic acid (3HCI). The chain is 3-(3-hydroxy-phenyl)propionate/3-hydroxycinnamic acid hydroxylase from Klebsiella pneumoniae subsp. pneumoniae (strain ATCC 700721 / MGH 78578).